We begin with the raw amino-acid sequence, 715 residues long: MNPIVKQFKYGQHTVTLETGAIARQATAAVMASMDDTTVFVTVVAKKEVKEGQDFFPLTVDYQERTYAAGRIPGGFFKREGRPSEGETLIARLIDRPVRPLFPEGFFNEIQVIATVVSVNPQISPDLVAMIGASAALSLSGVPFNGPIGAARVGFINDQFVLNPTTSEQKISRLDLVVAGTDKAVLMVESEADILSEEQMLSAVVFGHQQQQVVIENIKEFVKEAGKPRWDWVAPEPNTALINQVKALAEARIGDAYRITEKQARYEQIDAIKADVIAQLTAQDETVSEGAIIDIITALESSIVRGRIIAGEPRIDGRTVDTVRALDICTGVLPRTHGSAIFTRGETQALAVATLGTERDAQIIDELTGEKSDRFLFHYNFPPYSVGETGRIGSPKRREIGHGRLAKRGVLAVMPTAEEFPYVVRVVSEITESNGSSSMASVCGASLALMDAGVPIKAAVAGIAMGLVKEEEKFVVLSDILGDEDHLGDMDFKVAGTREGVTALQMDIKIEGITPEIMQIALNQAKGARMHILSVMEQAIPAPRADISDFAPRIHTMKIDPKKIKDVIGKGGAVIRALTEETGTSIDIDDDGTVKIAATDNNAAKAVMARIEDIVAEVEVNAIYKGKVTRVVDFGAFVSILGGKEGLVHISQITNERVERVADYLSVGQEVTVKVVEIDRQNRIRLTMKDLNNDTPVAENVTEEAEVSSEQQAEI.

Positions 485 and 491 each coordinate Mg(2+). The KH domain maps to 552–611; it reads PRIHTMKIDPKKIKDVIGKGGAVIRALTEETGTSIDIDDDGTVKIAATDNNAAKAVMARI. The 69-residue stretch at 621 to 689 folds into the S1 motif domain; the sequence is NAIYKGKVTR…RQNRIRLTMK (69 aa). The segment at 695-715 is disordered; that stretch reads TPVAENVTEEAEVSSEQQAEI.

The protein belongs to the polyribonucleotide nucleotidyltransferase family. As to quaternary structure, component of the RNA degradosome, which is a multiprotein complex involved in RNA processing and mRNA degradation. Mg(2+) serves as cofactor.

The protein localises to the cytoplasm. It carries out the reaction RNA(n+1) + phosphate = RNA(n) + a ribonucleoside 5'-diphosphate. Its function is as follows. Involved in mRNA degradation. Catalyzes the phosphorolysis of single-stranded polyribonucleotides processively in the 3'- to 5'-direction. The sequence is that of Polyribonucleotide nucleotidyltransferase from Actinobacillus pleuropneumoniae serotype 7 (strain AP76).